The following is a 126-amino-acid chain: C-type natriuretic peptide (126 aa).

The N-terminal stretch at 1 to 23 (MHLSQLLACALLLTLLSLRPSEA) is a signal peptide. The disordered stretch occupies residues 19–72 (RPSEAKPGAPPKVPRTPPGEEVAEPQAAGGGQKKGDKTPGGGGANLKGDRSRLL). Positions 24–73 (KPGAPPKVPRTPPGEEVAEPQAAGGGQKKGDKTPGGGGANLKGDRSRLLR) are excised as a propeptide. Pro residues predominate over residues 26–35 (GAPPKVPRTP). The span at 46-63 (AGGGQKKGDKTPGGGGAN) shows a compositional bias: gly residues. Cysteine 110 and cysteine 126 are disulfide-bonded.

The protein belongs to the natriuretic peptide family. In terms of processing, degraded by IDE (in vitro).

It localises to the secreted. In terms of biological role, hormone which plays a role in endochondral ossification through regulation of cartilaginous growth plate chondrocytes proliferation and differentiation. May also be vasoactive and natriuretic. Acts by specifically binding and stimulating NPR2 to produce cGMP. Binds the clearance receptor NPR3. This chain is C-type natriuretic peptide (NPPC), found in Sus scrofa (Pig).